We begin with the raw amino-acid sequence, 296 residues long: 4-hydroxybenzoate octaprenyltransferase (296 aa).

8 consecutive transmembrane segments (helical) span residues 28 to 48 (IGTLLLLWPTYWALWLASDGI), 51 to 71 (LAVLAAFTIGTFLMRSAGCVI), 102 to 122 (LLLTAFLCLLAALCLIPLNHL), 143 to 163 (FFPIPQLYLGLAFSFGIPMAF), 174 to 194 (AWILFTANVLWTLAYDTVYAM), 212 to 232 (FGRYDIAAVMLCHGGFTLLMA), 233 to 253 (VLGAVIGAAWAYWTAIPIVLL), and 274 to 294 (FLANNRIGWVWFTAIFAHTFF).

This sequence belongs to the UbiA prenyltransferase family. The cofactor is Mg(2+).

The protein localises to the cell inner membrane. The enzyme catalyses all-trans-octaprenyl diphosphate + 4-hydroxybenzoate = 4-hydroxy-3-(all-trans-octaprenyl)benzoate + diphosphate. It functions in the pathway cofactor biosynthesis; ubiquinone biosynthesis. Its function is as follows. Catalyzes the prenylation of para-hydroxybenzoate (PHB) with an all-trans polyprenyl group. Mediates the second step in the final reaction sequence of ubiquinone-8 (UQ-8) biosynthesis, which is the condensation of the polyisoprenoid side chain with PHB, generating the first membrane-bound Q intermediate 3-octaprenyl-4-hydroxybenzoate. The sequence is that of 4-hydroxybenzoate octaprenyltransferase from Neisseria meningitidis serogroup C (strain 053442).